The sequence spans 405 residues: Sialic acid transporter NanX (405 aa).

Over Met-1–Ala-20 the chain is Cytoplasmic. The chain crosses the membrane as a helical span at residues Trp-21–Ile-41. Residues Lys-42–Thr-53 lie on the Periplasmic side of the membrane. Residues Leu-54–Ala-74 form a helical membrane-spanning segment. Topologically, residues Asp-75 to Lys-80 are cytoplasmic. The helical transmembrane segment at Pro-81–Thr-101 threads the bilayer. Asn-102 is a topological domain (periplasmic). The helical transmembrane segment at Leu-103–Cys-123 threads the bilayer. The Cytoplasmic segment spans residues Ala-124–Lys-139. A helical transmembrane segment spans residues Ala-140 to Pro-160. At Gln-161–Glu-164 the chain is on the periplasmic side. The helical transmembrane segment at Val-165–Ile-185 threads the bilayer. Topologically, residues Arg-186–His-214 are cytoplasmic. Residues Leu-215–Ile-235 form a helical membrane-spanning segment. At Asn-236–Thr-250 the chain is on the periplasmic side. Residues Val-251–Phe-271 traverse the membrane as a helical segment. The Cytoplasmic segment spans residues Gly-272–Lys-282. Residues Ala-283–Val-303 form a helical membrane-spanning segment. The Periplasmic portion of the chain corresponds to Lys-304–Ser-307. The chain crosses the membrane as a helical span at residues Leu-308–Pro-328. Over Lys-329–Thr-344 the chain is Cytoplasmic. The helical transmembrane segment at Gly-345 to Ile-365 threads the bilayer. At Ser-366–Leu-371 the chain is on the periplasmic side. The helical transmembrane segment at Gly-372 to Phe-392 threads the bilayer. The Cytoplasmic segment spans residues Asp-393 to Lys-405.

It belongs to the major facilitator superfamily. Sugar transporter (TC 2.A.1.1) family.

It is found in the cell inner membrane. Its function is as follows. Probably transports across the inner membrane the two dehydrated forms of N-acetylneuraminate (Neu5Ac), 2,7-anhydro-N-acetylneuraminate (2,7-AN) and 2-deoxy-2,3-didehydro-N-acetylneuraminate (2,3-EN). The protein is Sialic acid transporter NanX of Escherichia coli (strain K12).